Reading from the N-terminus, the 126-residue chain is Small nuclear ribonucleoprotein Sm D3 (126 aa).

An N-acetylserine modification is found at Ser2. The region spanning 5 to 77 is the Sm domain; it reads VPIKVLHEAE…IRFLILPDML (73 aa). A run of 5 repeats spans residues 110 to 111, 112 to 113, 114 to 115, 116 to 117, and 118 to 119. Residues 110–119 are 5 X 2 AA tandem repeats of [RM]-G; required for interaction with SMN1; sequence RGRGRGMGRG.

This sequence belongs to the snRNP core protein family. As to quaternary structure, core component of the spliceosomal U1, U2, U4 and U5 small nuclear ribonucleoproteins (snRNPs), the building blocks of the spliceosome. Most spliceosomal snRNPs contain a common set of Sm proteins, SNRPB, SNRPD1, SNRPD2, SNRPD3, SNRPE, SNRPF and SNRPG that assemble in a heptameric protein ring on the Sm site of the small nuclear RNA to form the core snRNP. Component of the U1 snRNP. The U1 snRNP is composed of the U1 snRNA and the 7 core Sm proteins SNRPB, SNRPD1, SNRPD2, SNRPD3, SNRPE, SNRPF and SNRPG, and at least three U1 snRNP-specific proteins SNRNP70/U1-70K, SNRPA/U1-A and SNRPC/U1-C. Component of the U4/U6-U5 tri-snRNP complex composed of the U4, U6 and U5 snRNAs and at least PRPF3, PRPF4, PRPF6, PRPF8, PRPF31, SNRNP200, TXNL4A, SNRNP40, SNRPB, SNRPD1, SNRPD2, SNRPD3, SNRPE, SNRPF, SNRPG, DDX23, CD2BP2, PPIH, SNU13, EFTUD2, SART1 and USP39, plus LSM2, LSM3, LSM4, LSM5, LSM6, LSM7 and LSM8. Component of the U7 snRNP complex, or U7 Sm protein core complex, that is composed of the U7 snRNA and at least LSM10, LSM11, SNRPB, SNRPD3, SNRPE, SNRPF and SNRPG; the complex does not contain SNRPD1 and SNRPD2. Component of the minor spliceosome, which splices U12-type introns. Part of the SMN-Sm complex that contains SMN1, GEMIN2/SIP1, DDX20/GEMIN3, GEMIN4, GEMIN5, GEMIN6, GEMIN7, GEMIN8, STRAP/UNRIP and the Sm proteins SNRPB, SNRPD1, SNRPD2, SNRPD3, SNRPE, SNRPF and SNRPG; catalyzes core snRNPs assembly. Forms a 6S pICln-Sm complex composed of CLNS1A/pICln, SNRPD1, SNRPD2, SNRPE, SNRPF and SNRPG; ring-like structure where CLNS1A/pICln mimics additional Sm proteins and which is unable to assemble into the core snRNP. Interacts (via C-terminus) with SMN1 (via Tudor domain); the interaction is direct. Post-translationally, methylated on arginine residues by PRMT5 and PRMT7; probable asymmetric dimethylation which is required for assembly and biogenesis of snRNPs.

Its subcellular location is the cytoplasm. The protein resides in the cytosol. The protein localises to the nucleus. Plays a role in pre-mRNA splicing as a core component of the spliceosomal U1, U2, U4 and U5 small nuclear ribonucleoproteins (snRNPs), the building blocks of the spliceosome. Component of both the pre-catalytic spliceosome B complex and activated spliceosome C complexes. As a component of the minor spliceosome, involved in the splicing of U12-type introns in pre-mRNAs. As part of the U7 snRNP it is involved in histone pre-mRNA 3'-end processing. The protein is Small nuclear ribonucleoprotein Sm D3 (SNRPD3) of Homo sapiens (Human).